The sequence spans 254 residues: Type III pantothenate kinase (254 aa).

6–13 (DVGNTNTV) is an ATP binding site. Residues Tyr-100 and 107-110 (GADR) each bind substrate. Asp-109 acts as the Proton acceptor in catalysis. A K(+)-binding site is contributed by Asp-129. Residue Thr-132 coordinates ATP. A substrate-binding site is contributed by Thr-184.

It belongs to the type III pantothenate kinase family. In terms of assembly, homodimer. NH4(+) is required as a cofactor. The cofactor is K(+).

It localises to the cytoplasm. The catalysed reaction is (R)-pantothenate + ATP = (R)-4'-phosphopantothenate + ADP + H(+). It participates in cofactor biosynthesis; coenzyme A biosynthesis; CoA from (R)-pantothenate: step 1/5. In terms of biological role, catalyzes the phosphorylation of pantothenate (Pan), the first step in CoA biosynthesis. This Halalkalibacterium halodurans (strain ATCC BAA-125 / DSM 18197 / FERM 7344 / JCM 9153 / C-125) (Bacillus halodurans) protein is Type III pantothenate kinase.